Consider the following 275-residue polypeptide: Notch homolog 2 N-terminal-like protein B (275 aa).

Positions 1–25 are cleaved as a signal peptide; it reads MPALRPALLWALLALWLCCATPAHA. 4 consecutive EGF-like domains span residues 26–63, 64–102, 105–143, and 144–180; these read LQCRDGYEPCVNEGMCVTYHNGTGYCKCPEGFLGEYCQ, HRDPCEKNRCQNGGTCVAQAMLGKATCRCASGFTGEDCQ, TSHPCFVSRPCLNGGTCHMLSRDTYECTCQVGFTGKECQ, and WTDACLSHPCANGSTCTTVANQFSCKCLTGFTGQKCE. Cystine bridges form between C28–C41, C35–C51, C53–C62, C68–C79, C73–C90, C92–C101, C109–C121, C115–C131, C133–C142, C148–C159, C153–C168, C170–C179, C186–C198, C192–C207, C209–C218, C225–C236, and C230–C246. N46 carries N-linked (GlcNAc...) asparagine glycosylation. The N-linked (GlcNAc...) asparagine glycan is linked to N155. The EGF-like 5; calcium-binding domain occupies 182–219; that stretch reads DVNECDIPGHCQHGGICLNLPGSYQCQCLQGFTGQYCD. The EGF-like 6 domain maps to 221–258; sequence LYVPCAPSPCVNGGTCRQTGDFTFECNCLPETVRRGTE.

This sequence belongs to the NOTCH family. Interacts with NOTCH2. Interacts with DLL1; the interaction is direct. In terms of tissue distribution, expressed in radial glia neural stem cells during cortical development.

The protein resides in the secreted. Its function is as follows. Human-specific protein that promotes neural progenitor proliferation and evolutionary expansion of the brain neocortex by regulating the Notch signaling pathway. Able to promote neural progenitor self-renewal, possibly by down-regulating neuronal differentiation genes, thereby delaying the differentiation of neuronal progenitors and leading to an overall final increase in neuronal production. Acts by enhancing the Notch signaling pathway via two different mechanisms that probably work in parallel to reach the same effect. Enhances Notch signaling pathway in a non-cell-autonomous manner via direct interaction with NOTCH2. Also promotes Notch signaling pathway in a cell-autonomous manner through inhibition of cis DLL1-NOTCH2 interactions, which promotes neuronal differentiation. This chain is Notch homolog 2 N-terminal-like protein B, found in Homo sapiens (Human).